The chain runs to 142 residues: Hemoglobin subunit alpha (142 aa).

Residues 2-142 form the Globin domain; the sequence is VLSDADKTHV…VATVLTSKYR (141 aa). Ser4 is modified (phosphoserine). Lys8 carries the N6-succinyllysine modification. Thr9 bears the Phosphothreonine mark. Lys12 is subject to N6-succinyllysine. N6-acetyllysine; alternate is present on Lys17. Lys17 carries the N6-succinyllysine; alternate modification. A Phosphotyrosine modification is found at Tyr25. Residue Ser36 is modified to Phosphoserine. The residue at position 41 (Lys41) is an N6-succinyllysine. Ser50 is modified (phosphoserine). An O2-binding site is contributed by His59. His88 contacts heme b. Position 103 is a phosphoserine (Ser103). Phosphothreonine is present on Thr109. Phosphoserine occurs at positions 125 and 132. Thr135 and Thr138 each carry phosphothreonine. Residue Ser139 is modified to Phosphoserine.

This sequence belongs to the globin family. In terms of assembly, heterotetramer of two alpha chains and two beta chains. As to expression, red blood cells.

In terms of biological role, involved in oxygen transport from the lung to the various peripheral tissues. Its function is as follows. Hemopressin acts as an antagonist peptide of the cannabinoid receptor CNR1. Hemopressin-binding efficiently blocks cannabinoid receptor CNR1 and subsequent signaling. The chain is Hemoglobin subunit alpha (HBA) from Dasyurus viverrinus (Eastern quoll).